The following is a 124-amino-acid chain: Large ribosomal subunit protein bL12 (124 aa).

This sequence belongs to the bacterial ribosomal protein bL12 family. As to quaternary structure, homodimer. Part of the ribosomal stalk of the 50S ribosomal subunit. Forms a multimeric L10(L12)X complex, where L10 forms an elongated spine to which 2 to 4 L12 dimers bind in a sequential fashion. Binds GTP-bound translation factors.

Functionally, forms part of the ribosomal stalk which helps the ribosome interact with GTP-bound translation factors. Is thus essential for accurate translation. The polypeptide is Large ribosomal subunit protein bL12 (Bacteroides fragilis (strain ATCC 25285 / DSM 2151 / CCUG 4856 / JCM 11019 / LMG 10263 / NCTC 9343 / Onslow / VPI 2553 / EN-2)).